The sequence spans 186 residues: Elongation factor P (186 aa).

It belongs to the elongation factor P family.

The protein localises to the cytoplasm. Its pathway is protein biosynthesis; polypeptide chain elongation. Functionally, involved in peptide bond synthesis. Stimulates efficient translation and peptide-bond synthesis on native or reconstituted 70S ribosomes in vitro. Probably functions indirectly by altering the affinity of the ribosome for aminoacyl-tRNA, thus increasing their reactivity as acceptors for peptidyl transferase. This chain is Elongation factor P, found in Prochlorococcus marinus (strain MIT 9211).